The sequence spans 483 residues: MNYPYEDFLDLFFSTHTDPLATAASTSSNGYSLNDLDIDWDCDFRDVIESIMGDEGAMMEPESEAVPMLHDQEGLCNSASTGLSVADGVSFGEPKTDESKGLRLVHLLVAAADASTGANKSRELTRVILARLKDLVSPGDRTNMERLAAHFTNGLSKLLERDSVLCPQQHRDDVYDQADVISAFELLQNMSPYVNFGYLTATQAILEAVKYERRIHIVDYDINEGVQWASLMQALVSRNTGPSAQHLRITALSRATNGKKSVAAVQETGRRLTAFADSIGQPFSYQHCKLDTNAFSTSSLKLVRGEAVVINCMLHLPRFSHQTPSSVISFLSEAKTLNPKLVTLVHEEVGLMGNQGFLYRFMDLLHQFSAIFDSLEAGLSIANPARGFVERVFIGPWVANWLTRITANDAEVESFASWPQWLETNGFKPLEVSFTNRCQAKLLLSLFNDGFRVEELGQNGLVLGWKSRRLVSASFWASCQTNQ.

The 383-residue stretch at 95–477 (KTDESKGLRL…RRLVSASFWA (383 aa)) folds into the GRAS domain. A leucine repeat I (LRI) region spans residues 102 to 165 (LRLVHLLVAA…SKLLERDSVL (64 aa)). Positions 184-251 (FELLQNMSPY…PSAQHLRITA (68 aa)) are VHIID. The short motif at 215–219 (IHIVD) is the VHIID element. A leucine repeat II (LRII) region spans residues 267 to 299 (ETGRRLTAFADSIGQPFSYQHCKLDTNAFSTSS). Residues 308 to 400 (VVINCMLHLP…RVFIGPWVAN (93 aa)) are PFYRE. Residues 403–477 (TRITANDAEV…RRLVSASFWA (75 aa)) form an SAW region.

It belongs to the GRAS family. Expressed in seedlings, roots, leaves and flowers.

It is found in the nucleus. Its function is as follows. Probable transcription factor involved in plant development. This Arabidopsis thaliana (Mouse-ear cress) protein is Scarecrow-like protein 26 (SCL26).